The sequence spans 227 residues: ATP synthase F(0) complex subunit a (227 aa).

Helical transmembrane passes span 14-34 (LLGI…FPTP), 69-89 (WATI…LGLL), 99-119 (LSLN…IGML), 137-157 (LLIP…PLAL), 180-200 (FVLI…LFLL), and 202-222 (ILEV…LSLY).

The protein belongs to the ATPase A chain family. Component of the ATP synthase complex composed at least of ATP5F1A/subunit alpha, ATP5F1B/subunit beta, ATP5MC1/subunit c (homooctomer), MT-ATP6/subunit a, MT-ATP8/subunit 8, ATP5ME/subunit e, ATP5MF/subunit f, ATP5MG/subunit g, ATP5MK/subunit k, ATP5MJ/subunit j, ATP5F1C/subunit gamma, ATP5F1D/subunit delta, ATP5F1E/subunit epsilon, ATP5PF/subunit F6, ATP5PB/subunit b, ATP5PD/subunit d, ATP5PO/subunit OSCP. ATP synthase complex consists of a soluble F(1) head domain (subunits alpha(3) and beta(3)) - the catalytic core - and a membrane F(0) domain - the membrane proton channel (subunits c, a, 8, e, f, g, k and j). These two domains are linked by a central stalk (subunits gamma, delta, and epsilon) rotating inside the F1 region and a stationary peripheral stalk (subunits F6, b, d, and OSCP). Interacts with DNAJC30; interaction is direct.

It is found in the mitochondrion inner membrane. The enzyme catalyses H(+)(in) = H(+)(out). Functionally, subunit a, of the mitochondrial membrane ATP synthase complex (F(1)F(0) ATP synthase or Complex V) that produces ATP from ADP in the presence of a proton gradient across the membrane which is generated by electron transport complexes of the respiratory chain. ATP synthase complex consist of a soluble F(1) head domain - the catalytic core - and a membrane F(1) domain - the membrane proton channel. These two domains are linked by a central stalk rotating inside the F(1) region and a stationary peripheral stalk. During catalysis, ATP synthesis in the catalytic domain of F(1) is coupled via a rotary mechanism of the central stalk subunits to proton translocation. With the subunit c (ATP5MC1), forms the proton-conducting channel in the F(0) domain, that contains two crucial half-channels (inlet and outlet) that facilitate proton movement from the mitochondrial intermembrane space (IMS) into the matrix. Protons are taken up via the inlet half-channel and released through the outlet half-channel, following a Grotthuss mechanism. The protein is ATP synthase F(0) complex subunit a of Squalus acanthias (Spiny dogfish).